The primary structure comprises 237 residues: Ribosomal RNA small subunit methyltransferase G (237 aa).

S-adenosyl-L-methionine-binding positions include glycine 78, phenylalanine 83, 129 to 130, and arginine 148; that span reads AE.

It belongs to the methyltransferase superfamily. RNA methyltransferase RsmG family.

It is found in the cytoplasm. Functionally, specifically methylates the N7 position of a guanine in 16S rRNA. This chain is Ribosomal RNA small subunit methyltransferase G, found in Streptococcus pyogenes serotype M12 (strain MGAS2096).